A 381-amino-acid polypeptide reads, in one-letter code: Cytochrome b (381 aa).

The next 4 membrane-spanning stretches (helical) occupy residues 34–54, 78–99, 114–134, and 179–199; these read FGSLLGLCLIIQILTGLFLAM, WLIRNIHANGASLFFICIYLHI, WNIGVILLFLLMATAFVGYVL, and FFAFHFLLPFLILALTVIHLL. Residues H84 and H98 each contribute to the heme b site. The heme b site is built by H183 and H197. H202 serves as a coordination point for a ubiquinone. A run of 4 helical transmembrane segments spans residues 227 to 247, 289 to 309, 321 to 341, and 348 to 368; these read YKDLLGFFIMIFFLATLALFM, LGGVLALLFSIFILMLVPLLH, MTQIFFWLLVANFLILTWIGG, and FMMVGQIASISYFALFLIIMP.

Belongs to the cytochrome b family. In terms of assembly, the cytochrome bc1 complex contains 3 respiratory subunits (MT-CYB, CYC1 and UQCRFS1), 2 core proteins (UQCRC1 and UQCRC2) and probably 6 low-molecular weight proteins. It depends on heme b as a cofactor.

The protein localises to the mitochondrion inner membrane. In terms of biological role, component of the ubiquinol-cytochrome c reductase complex (complex III or cytochrome b-c1 complex) that is part of the mitochondrial respiratory chain. The b-c1 complex mediates electron transfer from ubiquinol to cytochrome c. Contributes to the generation of a proton gradient across the mitochondrial membrane that is then used for ATP synthesis. This Prionace glauca (Blue shark) protein is Cytochrome b (mt-cyb).